The primary structure comprises 111 residues: MEAKAKLSMIRISPRKMRLVADTIRNKAVSVAVATLKNLNKDAAEPILKLLNSAVANAVNNNGMEADKLYVKTIFVNEGPTLKRFRPRAHGRAYEIFKRTSHVVIVVSDEK.

This sequence belongs to the universal ribosomal protein uL22 family. Part of the 50S ribosomal subunit.

In terms of biological role, this protein binds specifically to 23S rRNA; its binding is stimulated by other ribosomal proteins, e.g. L4, L17, and L20. It is important during the early stages of 50S assembly. It makes multiple contacts with different domains of the 23S rRNA in the assembled 50S subunit and ribosome. Its function is as follows. The globular domain of the protein is located near the polypeptide exit tunnel on the outside of the subunit, while an extended beta-hairpin is found that lines the wall of the exit tunnel in the center of the 70S ribosome. In Mycoplasma capricolum subsp. capricolum (strain California kid / ATCC 27343 / NCTC 10154), this protein is Large ribosomal subunit protein uL22.